We begin with the raw amino-acid sequence, 231 residues long: PIAGSMVLAAILLKLGGYGIIRMMQIMPTTKTDMFLPLVVLALWGAVLANLTCLQQTDLKSLIAYSSISHMGLVAAAIIIQTPWGLSGGMTLMIAHGFTSSALFCLANTTYERTHTRILILTRGFHNILPMATTWWLLTNLMNIATPPTTNFTSELLIMSALFNWCPTTIIMLGLSMLITASYSLHMFLSTQMGPPPSNNLTEPSHSREHLLMILHIMPLLMISLKSELII.

The next 6 membrane-spanning stretches (helical) occupy residues Pro1–Ile21, Met34–Leu54, Ile63–Gly85, Gly89–Tyr111, Ile118–Leu138, and Leu156–Ser176.

The protein belongs to the complex I subunit 4 family.

It is found in the mitochondrion membrane. It carries out the reaction a ubiquinone + NADH + 5 H(+)(in) = a ubiquinol + NAD(+) + 4 H(+)(out). Core subunit of the mitochondrial membrane respiratory chain NADH dehydrogenase (Complex I) that is believed to belong to the minimal assembly required for catalysis. Complex I functions in the transfer of electrons from NADH to the respiratory chain. The immediate electron acceptor for the enzyme is believed to be ubiquinone. This Calloselasma rhodostoma (Malayan pit viper) protein is NADH-ubiquinone oxidoreductase chain 4 (MT-ND4).